The sequence spans 557 residues: Acetylcholine receptor subunit alpha-L1 (557 aa).

Residues 1–23 (MAAALPPMLLLLLLLLLHHPAAA) form the signal peptide. The Extracellular portion of the chain corresponds to 24 to 244 (NPDAKRLYDD…NITLRRKTLF (221 aa)). A glycan (N-linked (GlcNAc...) asparagine) is linked at asparagine 47. 2 cysteine pairs are disulfide-bonded: cysteine 151-cysteine 165 and cysteine 224-cysteine 225. Asparagine 235 carries N-linked (GlcNAc...) asparagine glycosylation. 3 helical membrane passes run 245–266 (YTVN…VFYL), 274–294 (IALC…ISEI), and 308–329 (YLLF…VLNV). Residues 330–500 (HYRKPSTHKM…EFDAEDQDWG (171 aa)) lie on the Cytoplasmic side of the membrane. The chain crosses the membrane as a helical span at residues 501-523 (FVAMVLDRLFLWIFTIASIVGTF).

This sequence belongs to the ligand-gated ion channel (TC 1.A.9) family. Acetylcholine receptor (TC 1.A.9.1) subfamily.

The protein resides in the postsynaptic cell membrane. It localises to the cell membrane. Its function is as follows. After binding acetylcholine, the AChR responds by an extensive change in conformation that affects all subunits and leads to opening of an ion-conducting channel across the plasma membrane. In Schistocerca gregaria (Desert locust), this protein is Acetylcholine receptor subunit alpha-L1.